The primary structure comprises 457 residues: MALWGGRFTQAADQRFKQFNDSLRFDYRLAEQDIVGSVAWSKALVTVGVLTAEEQAQLEEALNVLLEDVRARPQQILESDAEDIHSWVEGKLIDKVGQLGKKLHTGRSRNDQVATDLKLWCKDTVSELLTANRQLQSALVETAQNNQDAVMPGYTHLQRAQPVTFAHWCLAYVEMLARDESRLQDALKRLDVSPLGCGALAGTAYEIDREQLAGWLGFASATRNSLDSVSDRDHVLELLSAAAIGMVHLSRFAEDLIFFNTGEAGFVELSDRVTSGSSLMPQKKNPDALELIRGKCGRVQGALTGMMMTLKGLPLAYNKDMQEDKEGLFDALDTWLDCLHMAALVLDGIQVKRPRCQEAAQQGYANATELADYLVAKGVPFREAHHIVGEAVVEAIRQGKPLEDLPLDELQKFSHVIGEDVYPILSLQSCLDKRAAKGGVSPQQVAQAIAFAQARLG.

This sequence belongs to the lyase 1 family. Argininosuccinate lyase subfamily.

The protein resides in the cytoplasm. The catalysed reaction is 2-(N(omega)-L-arginino)succinate = fumarate + L-arginine. It participates in amino-acid biosynthesis; L-arginine biosynthesis; L-arginine from L-ornithine and carbamoyl phosphate: step 3/3. The protein is Argininosuccinate lyase of Shigella boydii serotype 18 (strain CDC 3083-94 / BS512).